A 241-amino-acid polypeptide reads, in one-letter code: Probable transcriptional regulatory protein Rpic_2388 (241 aa).

It belongs to the TACO1 family.

The protein localises to the cytoplasm. This Ralstonia pickettii (strain 12J) protein is Probable transcriptional regulatory protein Rpic_2388.